The sequence spans 567 residues: Chitinase 3 (567 aa).

A signal peptide spans 1-16; sequence MLYLLTIFSLLLPALA. Residues 23 to 313 enclose the GH18 domain; it reads SNVAVYWGQN…ENMKAIVKKA (291 aa). The active-site Proton donor is Glu157. An N-linked (GlcNAc...) asparagine glycan is attached at Asn159. Positions 313-471 are disordered; it reads ASPGEETTSS…TSALSSSTTT (159 aa). Composition is skewed to low complexity over residues 319 to 436 and 444 to 471; these read TTSS…SLSS and STTTGISKSSSTKPATSTTSALSSSTTT.

It belongs to the glycosyl hydrolase 18 family. Chitinase class III subfamily.

It localises to the secreted. The catalysed reaction is Random endo-hydrolysis of N-acetyl-beta-D-glucosaminide (1-&gt;4)-beta-linkages in chitin and chitodextrins.. Chitinase involved in the remodeling of chitin in the fungal cell wall. Plays a role in cell separation. This Candida albicans (strain SC5314 / ATCC MYA-2876) (Yeast) protein is Chitinase 3 (CHT3).